The following is a 682-amino-acid chain: Transcription activator of gluconeogenesis PODANS_4_8760 (682 aa).

A disordered region spans residues M1 to K72. The segment covering G9 to E21 has biased composition (low complexity). 2 stretches are compositionally biased toward basic and acidic residues: residues H29 to S41 and G54 to R67. The zn(2)-C6 fungal-type DNA-binding region spans C77–C105. Disordered stretches follow at residues E122–S148, L181–V211, P325–K375, N509–G541, and T586–L622. 3 stretches are compositionally biased toward polar residues: residues L185–P206, T329–T345, and P354–P373.

This sequence belongs to the ERT1/acuK family.

The protein resides in the nucleus. In terms of biological role, transcription factor which regulates nonfermentable carbon utilization. Activator of gluconeogenetic genes. This Podospora anserina (strain S / ATCC MYA-4624 / DSM 980 / FGSC 10383) (Pleurage anserina) protein is Transcription activator of gluconeogenesis PODANS_4_8760.